A 194-amino-acid chain; its full sequence is ATP-dependent Clp protease proteolytic subunit 3 (194 aa).

The active-site Nucleophile is the Ser-96. The active site involves His-121.

It belongs to the peptidase S14 family. Fourteen ClpP subunits assemble into 2 heptameric rings which stack back to back to give a disk-like structure with a central cavity, resembling the structure of eukaryotic proteasomes.

The protein localises to the cytoplasm. The enzyme catalyses Hydrolysis of proteins to small peptides in the presence of ATP and magnesium. alpha-casein is the usual test substrate. In the absence of ATP, only oligopeptides shorter than five residues are hydrolyzed (such as succinyl-Leu-Tyr-|-NHMec, and Leu-Tyr-Leu-|-Tyr-Trp, in which cleavage of the -Tyr-|-Leu- and -Tyr-|-Trp bonds also occurs).. Functionally, cleaves peptides in various proteins in a process that requires ATP hydrolysis. Has a chymotrypsin-like activity. Plays a major role in the degradation of misfolded proteins. This is ATP-dependent Clp protease proteolytic subunit 3 from Rhizobium johnstonii (strain DSM 114642 / LMG 32736 / 3841) (Rhizobium leguminosarum bv. viciae).